Here is a 152-residue protein sequence, read N- to C-terminus: UPF0225 protein YchJ (152 aa).

The protein belongs to the UPF0225 family.

The protein is UPF0225 protein YchJ of Shigella dysenteriae serotype 1 (strain Sd197).